Here is a 174-residue protein sequence, read N- to C-terminus: Methionine-R-sulfoxide reductase B2, mitochondrial (174 aa).

The transit peptide at 1–61 directs the protein to the mitochondrion; sequence MARLLRALRG…PEQFYVTREK (61 aa). The MsrB domain maps to 62–172; it reads GTEAPFSGMY…NSVALKFKPS (111 aa). Cysteine 82, cysteine 85, cysteine 138, and cysteine 141 together coordinate Zn(2+). Cysteine 161 (nucleophile) is an active-site residue.

The protein belongs to the MsrB Met sulfoxide reductase family. The cofactor is Zn(2+).

The protein resides in the mitochondrion. It catalyses the reaction L-methionyl-[protein] + [thioredoxin]-disulfide + H2O = L-methionyl-(R)-S-oxide-[protein] + [thioredoxin]-dithiol. The enzyme catalyses [thioredoxin]-disulfide + L-methionine + H2O = L-methionine (R)-S-oxide + [thioredoxin]-dithiol. Methionine-sulfoxide reductase that specifically reduces methionine (R)-sulfoxide back to methionine. While in many cases, methionine oxidation is the result of random oxidation following oxidative stress, methionine oxidation is also a post-translational modification that takes place on specific residue. Upon oxidative stress, may play a role in the preservation of mitochondrial integrity by decreasing the intracellular reactive oxygen species build-up through its scavenging role, hence contributing to cell survival and protein maintenance. In Rattus norvegicus (Rat), this protein is Methionine-R-sulfoxide reductase B2, mitochondrial (Msrb2).